The sequence spans 186 residues: Protein GrpE (186 aa).

Positions 1–13 (MSENTQPEQNQPL) are enriched in polar residues. The disordered stretch occupies residues 1-22 (MSENTQPEQNQPLTGAPSPEEL).

It belongs to the GrpE family. As to quaternary structure, homodimer.

The protein localises to the cytoplasm. Its function is as follows. Participates actively in the response to hyperosmotic and heat shock by preventing the aggregation of stress-denatured proteins, in association with DnaK and GrpE. It is the nucleotide exchange factor for DnaK and may function as a thermosensor. Unfolded proteins bind initially to DnaJ; upon interaction with the DnaJ-bound protein, DnaK hydrolyzes its bound ATP, resulting in the formation of a stable complex. GrpE releases ADP from DnaK; ATP binding to DnaK triggers the release of the substrate protein, thus completing the reaction cycle. Several rounds of ATP-dependent interactions between DnaJ, DnaK and GrpE are required for fully efficient folding. The polypeptide is Protein GrpE (Polaromonas sp. (strain JS666 / ATCC BAA-500)).